We begin with the raw amino-acid sequence, 361 residues long: Anthranilate phosphoribosyltransferase (361 aa).

5-phospho-alpha-D-ribose 1-diphosphate contacts are provided by residues Gly80, 83-84 (GD), Thr88, 90-93 (NVST), 108-116 (KHGNYSVSS), and Ser120. Gly80 lines the anthranilate pocket. Ser92 is a Mg(2+) binding site. Asn111 serves as a coordination point for anthranilate. Position 166 (Arg166) interacts with anthranilate. Residues Asp224 and Glu225 each coordinate Mg(2+). The tract at residues 338 to 361 (EGDGEAASTDSAAASTTAGPEDDD) is disordered. Low complexity predominate over residues 343–355 (AASTDSAAASTTA).

The protein belongs to the anthranilate phosphoribosyltransferase family. In terms of assembly, homodimer. Mg(2+) is required as a cofactor.

It catalyses the reaction N-(5-phospho-beta-D-ribosyl)anthranilate + diphosphate = 5-phospho-alpha-D-ribose 1-diphosphate + anthranilate. It participates in amino-acid biosynthesis; L-tryptophan biosynthesis; L-tryptophan from chorismate: step 2/5. Functionally, catalyzes the transfer of the phosphoribosyl group of 5-phosphorylribose-1-pyrophosphate (PRPP) to anthranilate to yield N-(5'-phosphoribosyl)-anthranilate (PRA). In Halorubrum lacusprofundi (strain ATCC 49239 / DSM 5036 / JCM 8891 / ACAM 34), this protein is Anthranilate phosphoribosyltransferase.